A 377-amino-acid chain; its full sequence is 4-hydroxy-3-methylbut-2-en-1-yl diphosphate synthase (flavodoxin) (377 aa).

[4Fe-4S] cluster contacts are provided by Cys-272, Cys-275, Cys-307, and Glu-314.

Belongs to the IspG family. [4Fe-4S] cluster is required as a cofactor.

The enzyme catalyses (2E)-4-hydroxy-3-methylbut-2-enyl diphosphate + oxidized [flavodoxin] + H2O + 2 H(+) = 2-C-methyl-D-erythritol 2,4-cyclic diphosphate + reduced [flavodoxin]. The protein operates within isoprenoid biosynthesis; isopentenyl diphosphate biosynthesis via DXP pathway; isopentenyl diphosphate from 1-deoxy-D-xylulose 5-phosphate: step 5/6. In terms of biological role, converts 2C-methyl-D-erythritol 2,4-cyclodiphosphate (ME-2,4cPP) into 1-hydroxy-2-methyl-2-(E)-butenyl 4-diphosphate. In Zymomonas mobilis subsp. mobilis (strain ATCC 31821 / ZM4 / CP4), this protein is 4-hydroxy-3-methylbut-2-en-1-yl diphosphate synthase (flavodoxin).